The following is a 719-amino-acid chain: Homeobox protein SIX5 (719 aa).

Low complexity-rich tracts occupy residues 1 to 22 and 31 to 65; these read MATS…AAAT and QLLQ…GPGS. Disordered stretches follow at residues 1 to 73 and 241 to 287; these read MATS…VTEV and WFKN…VASM. The homeobox DNA-binding region spans 194–253; sequence GEETVYCFKERSRAALKACYRGNRYPTPDEKRRLATLTGLSLTQVSNWFKNRRQRDRTGT. The segment covering 272-282 has biased composition (basic and acidic residues); sequence ESSRSPEDLER.

This sequence belongs to the SIX/Sine oculis homeobox family. In terms of assembly, probably binds DNA dimer. Interacts with EYA3, and probably EYA1 and EYA2.

The protein resides in the nucleus. Its function is as follows. Transcription factor that is thought to be involved in regulation of organogenesis. May be involved in determination and maintenance of retina formation. Binds a 5'-GGTGTCAG-3' motif present in the ARE regulatory element of ATP1A1. Binds a 5'-TCA[AG][AG]TTNC-3' motif present in the MEF3 element in the myogenin promoter, and in the IGFBP5 promoter. Thought to be regulated by association with Dach and Eya proteins, and seems to be coactivated by EYA1, EYA2 and EYA3. This chain is Homeobox protein SIX5 (Six5), found in Mus musculus (Mouse).